Consider the following 109-residue polypeptide: Phosphoribosyl-ATP pyrophosphatase (109 aa).

Belongs to the PRA-PH family.

Its subcellular location is the cytoplasm. The catalysed reaction is 1-(5-phospho-beta-D-ribosyl)-ATP + H2O = 1-(5-phospho-beta-D-ribosyl)-5'-AMP + diphosphate + H(+). Its pathway is amino-acid biosynthesis; L-histidine biosynthesis; L-histidine from 5-phospho-alpha-D-ribose 1-diphosphate: step 2/9. This is Phosphoribosyl-ATP pyrophosphatase from Parvibaculum lavamentivorans (strain DS-1 / DSM 13023 / NCIMB 13966).